We begin with the raw amino-acid sequence, 435 residues long: MVGFGANRRAGRLPSFVLVVLLVVIVVLAFNYWSISSRHVLLQEEVAELQGQVQRTEVARGRLEKRNSDLLLLVDTHKKQIDQKEADYGRLSSRLQAKEGLGKRCEDDKVKLQNNISYQMADIHHLKEQLAELRQEFLRQEDQLQDYRKNNTYLVKRLEYESFQCGQQIKELRAQHEENIKKLADQFLQEQKETHKIQSNDGKELGRNDHGAPKNIPNVPENDANKNEDPSSNHLPHGKEQLKRVGDAGMPGVEENDLAKVDELPAALKKPPVLASQHESHQTISHLPTGQPLSPNMAPGSHLNQNENPSTSKQNPSNPLQHIIPGPNLDREPRIQTDTLKQATRDRANDFHKLKQSRFFDENESPVDPQHGSKLADYNGDDGNVGEYEADKQAELAYNEEEDGDGGEEDVQDDEERELQMDPADYGKQRFSDVL.

Residue Met-1 is modified to N-acetylmethionine. Residues 1 to 14 lie on the Cytoplasmic side of the membrane; that stretch reads MVGFGANRRAGRLP. The helical; Signal-anchor for type II membrane protein transmembrane segment at 15 to 35 threads the bilayer; it reads SFVLVVLLVVIVVLAFNYWSI. Residues 35-194 are a coiled coil; it reads ISSRHVLLQE…DQFLQEQKET (160 aa). At 36 to 435 the chain is on the lumenal side; the sequence is SSRHVLLQEE…YGKQRFSDVL (400 aa). Composition is skewed to basic and acidic residues over residues 191–212 and 223–239; these read QKET…DHGA and DANK…PHGK. 2 disordered regions span residues 191 to 239 and 271 to 435; these read QKET…PHGK and PPVL…SDVL. A Phosphoserine modification is found at Ser-232. 2 stretches are compositionally biased toward polar residues: residues 282–294 and 302–320; these read QTIS…QPLS and HLNQ…SNPL. Residues 343–361 are compositionally biased toward basic and acidic residues; that stretch reads ATRDRANDFHKLKQSRFFD. Position 365 is a phosphoserine (Ser-365). The span at 398–417 shows a compositional bias: acidic residues; sequence YNEEEDGDGGEEDVQDDEER. The segment covering 425–435 has biased composition (basic and acidic residues); that stretch reads DYGKQRFSDVL.

This sequence belongs to the GOLM family.

Its subcellular location is the membrane. The polypeptide is Protein GOLM2 (Mus musculus (Mouse)).